The following is a 177-amino-acid chain: Putative HVA22-like protein g (177 aa).

Residues 145 to 165 form a disordered region; it reads QSTPKSKAEEKKETTIPKLDD. A compositionally biased stretch (basic and acidic residues) spans 150-165; sequence SKAEEKKETTIPKLDD.

The protein belongs to the DP1 family.

The protein is Putative HVA22-like protein g (HVA22G) of Arabidopsis thaliana (Mouse-ear cress).